Here is a 127-residue protein sequence, read N- to C-terminus: Modulator protein MzrA (127 aa).

The Cytoplasmic segment spans residues Met-1–Leu-11. A helical membrane pass occupies residues Ala-12 to Val-31. Over Arg-32–Gly-127 the chain is Periplasmic.

The protein belongs to the MzrA family. In terms of assembly, interacts with EnvZ.

The protein resides in the cell inner membrane. Functionally, modulates the activity of the EnvZ/OmpR two-component regulatory system, probably by directly modulating EnvZ enzymatic activity and increasing stability of phosphorylated OmpR. The protein is Modulator protein MzrA of Citrobacter rodentium (strain ICC168) (Citrobacter freundii biotype 4280).